Here is a 323-residue protein sequence, read N- to C-terminus: Glyoxylate/hydroxypyruvate reductase B (323 aa).

Residues arginine 237 and glutamate 266 contribute to the active site. The active-site Proton donor is histidine 285.

This sequence belongs to the D-isomer specific 2-hydroxyacid dehydrogenase family. GhrB subfamily. In terms of assembly, homodimer.

Its subcellular location is the cytoplasm. The catalysed reaction is glycolate + NADP(+) = glyoxylate + NADPH + H(+). The enzyme catalyses (R)-glycerate + NAD(+) = 3-hydroxypyruvate + NADH + H(+). It carries out the reaction (R)-glycerate + NADP(+) = 3-hydroxypyruvate + NADPH + H(+). Catalyzes the NADPH-dependent reduction of glyoxylate and hydroxypyruvate into glycolate and glycerate, respectively. This Klebsiella pneumoniae subsp. pneumoniae (strain ATCC 700721 / MGH 78578) protein is Glyoxylate/hydroxypyruvate reductase B.